The primary structure comprises 288 residues: Shikimate dehydrogenase (NADP(+)) (288 aa).

Shikimate contacts are provided by residues 21–23 (SLS) and T68. Residue K72 is the Proton acceptor of the active site. E84 is an NADP(+) binding site. Positions 93 and 108 each coordinate shikimate. Residues 132-136 (GNGGA) and L230 each bind NADP(+). A shikimate-binding site is contributed by Y232. G253 serves as a coordination point for NADP(+).

This sequence belongs to the shikimate dehydrogenase family. As to quaternary structure, homodimer.

The catalysed reaction is shikimate + NADP(+) = 3-dehydroshikimate + NADPH + H(+). The protein operates within metabolic intermediate biosynthesis; chorismate biosynthesis; chorismate from D-erythrose 4-phosphate and phosphoenolpyruvate: step 4/7. In terms of biological role, involved in the biosynthesis of the chorismate, which leads to the biosynthesis of aromatic amino acids. Catalyzes the reversible NADPH linked reduction of 3-dehydroshikimate (DHSA) to yield shikimate (SA). This chain is Shikimate dehydrogenase (NADP(+)), found in Gloeothece citriformis (strain PCC 7424) (Cyanothece sp. (strain PCC 7424)).